The following is a 2343-amino-acid chain: Coagulation factor VIII (2343 aa).

A signal peptide spans 1–19; it reads MQVELYTCCFLCLLPFSLS. 2 Plastocyanin-like domains span residues 20 to 199 and 207 to 343; these read ATRK…LLVC and ERTQ…VDSC. Residues 20–343 form the F5/8 type A 1 domain; that stretch reads ATRKYYLGAV…MEAYVKVDSC (324 aa). Asn-233 and Asn-253 each carry an N-linked (GlcNAc...) asparagine glycan. 2 positions are modified to sulfotyrosine: Tyr-359 and Tyr-408. Plastocyanin-like domains are found at residues 393-567 and 577-724; these read KTWV…LLIC and NQMM…VSSC. Residues 393 to 724 enclose the F5/8 type A 2 domain; it reads KTWVHYIAAE…MTALLKVSSC (332 aa). A glycan (N-linked (GlcNAc...) asparagine) is linked at Asn-595. 3 positions are modified to sulfotyrosine: Tyr-731, Tyr-732, and Tyr-736. Positions 752 to 761 are enriched in polar residues; the sequence is PRSFSQNSRH. Disordered stretches follow at residues 752–774 and 828–865; these read PRSFSQNSRHPSTKEKQLKATTT and ADDHSRGAIERNKGPPEVASLRPELRHSEDREFTPEPE. Residues 754–1659 are b; that stretch reads SFSQNSRHPS…NPPVSKHHQR (906 aa). Composition is skewed to basic and acidic residues over residues 828–841 and 850–861; these read ADDHSRGAIERNKG and PELRHSEDREFT. Asn-877, Asn-921, Asn-937, Asn-938, Asn-956, Asn-1007, Asn-1019, Asn-1037, Asn-1062, Asn-1069, and Asn-1080 each carry an N-linked (GlcNAc...) asparagine glycan. Positions 1124–1147 are disordered; that stretch reads GKNSLSSEQRPSPKQLTSLGSEKS. Over residues 1125–1147 the composition is skewed to polar residues; that stretch reads KNSLSSEQRPSPKQLTSLGSEKS. Asn-1179, Asn-1193, Asn-1275, Asn-1290, Asn-1308, Asn-1341, Asn-1391, Asn-1419, Asn-1429, Asn-1453, Asn-1547, and Asn-1618 each carry an N-linked (GlcNAc...) asparagine glycan. Residues 1302 to 1314 are compositionally biased toward polar residues; the sequence is TTRMSSNASQHVI. The disordered stretch occupies residues 1302-1326; the sequence is TTRMSSNASQHVITQRGKRSLKQPR. The interval 1592–1632 is disordered; the sequence is KSQKKSQTNTAFKRKDTILPLGPCENNDSTAAINEGQDKPQ. Sulfotyrosine is present on residues Tyr-1675 and Tyr-1691. Plastocyanin-like domains follow at residues 1705–1869 and 1879–2032; these read KTRH…LLIC and GRQV…SKKC. One can recognise an F5/8 type A 3 domain in the interval 1705–2032; it reads KTRHYFIAAV…TLFLVYSKKC (328 aa). A glycan (N-linked (GlcNAc...) asparagine) is linked at Asn-1821. 2 consecutive F5/8 type C domains span residues 2032–2180 and 2185–2337; these read CQTP…LLGC and CSMP…VLGC. 2 cysteine pairs are disulfide-bonded: Cys-2032–Cys-2180 and Cys-2185–Cys-2337. 2 N-linked (GlcNAc...) asparagine glycosylation sites follow: Asn-2129 and Asn-2281.

The protein belongs to the multicopper oxidase family. Interacts with vWF. vWF binding is essential for the stabilization of F8 in circulation. Proteolytically cleaved by cathepsin CTSG to produce a partially activated form.

The protein resides in the secreted. It localises to the extracellular space. Its function is as follows. Factor VIII, along with calcium and phospholipid, acts as a cofactor for factor IXa when it converts factor X to the activated form, factor Xa. In Canis lupus familiaris (Dog), this protein is Coagulation factor VIII (F8).